Here is a 180-residue protein sequence, read N- to C-terminus: Hypoxanthine-guanine phosphoribosyltransferase (180 aa).

Residues Lys-43 and Gly-44 each contribute to the diphosphate site. Mg(2+)-binding residues include Glu-99 and Asp-100. Asp-103 acts as the Proton acceptor in catalysis. GMP-binding positions include Lys-131, 152 to 153 (FI), and Asp-159. Diphosphate is bound at residue Arg-165.

Belongs to the purine/pyrimidine phosphoribosyltransferase family. It depends on Mg(2+) as a cofactor.

Its subcellular location is the cytoplasm. It carries out the reaction IMP + diphosphate = hypoxanthine + 5-phospho-alpha-D-ribose 1-diphosphate. It catalyses the reaction GMP + diphosphate = guanine + 5-phospho-alpha-D-ribose 1-diphosphate. The protein operates within purine metabolism; IMP biosynthesis via salvage pathway; IMP from hypoxanthine: step 1/1. It functions in the pathway purine metabolism; GMP biosynthesis via salvage pathway; GMP from guanine: step 1/1. In terms of biological role, purine salvage pathway enzyme that catalyzes the transfer of the ribosyl-5-phosphate group from 5-phospho-alpha-D-ribose 1-diphosphate (PRPP) to the N9 position of the 6-oxopurines hypoxanthine and guanine to form the corresponding ribonucleotides IMP (inosine 5'-monophosphate) and GMP (guanosine 5'-monophosphate), with the release of PPi. In Streptococcus pyogenes serotype M3 (strain ATCC BAA-595 / MGAS315), this protein is Hypoxanthine-guanine phosphoribosyltransferase (hpt).